The primary structure comprises 141 residues: Nucleoside diphosphate kinase (141 aa).

ATP-binding residues include Lys11, Phe59, Arg87, Thr93, Arg104, and Asn114. His117 (pros-phosphohistidine intermediate) is an active-site residue.

Belongs to the NDK family. In terms of assembly, homotetramer. Requires Mg(2+) as cofactor.

The protein localises to the cytoplasm. It catalyses the reaction a 2'-deoxyribonucleoside 5'-diphosphate + ATP = a 2'-deoxyribonucleoside 5'-triphosphate + ADP. The catalysed reaction is a ribonucleoside 5'-diphosphate + ATP = a ribonucleoside 5'-triphosphate + ADP. Its function is as follows. Major role in the synthesis of nucleoside triphosphates other than ATP. The ATP gamma phosphate is transferred to the NDP beta phosphate via a ping-pong mechanism, using a phosphorylated active-site intermediate. The sequence is that of Nucleoside diphosphate kinase from Paraburkholderia phytofirmans (strain DSM 17436 / LMG 22146 / PsJN) (Burkholderia phytofirmans).